The following is a 170-amino-acid chain: Urease accessory protein UreE (170 aa).

A disordered region spans residues 137-170 (PFDPESGAYAHAGREQSHAHSHEHSHADGHTHAH). The span at 148–170 (AGREQSHAHSHEHSHADGHTHAH) shows a compositional bias: basic and acidic residues.

It belongs to the UreE family.

The protein localises to the cytoplasm. Its function is as follows. Involved in urease metallocenter assembly. Binds nickel. Probably functions as a nickel donor during metallocenter assembly. In Pseudoalteromonas translucida (strain TAC 125), this protein is Urease accessory protein UreE.